Consider the following 195-residue polypeptide: Small ribosomal subunit protein eS7 (195 aa).

Residues Thr-146 and Thr-151 each carry the phosphothreonine modification. Phosphoserine occurs at positions 172 and 173.

This sequence belongs to the eukaryotic ribosomal protein eS7 family. In terms of assembly, component of the small ribosomal subunit (SSU). Mature yeast ribosomes consist of a small (40S) and a large (60S) subunit. The 40S small subunit contains 1 molecule of ribosomal RNA (18S rRNA) and at least 33 different proteins. The large 60S subunit contains 3 rRNA molecules (25S, 5.8S and 5S rRNA) and at least 46 different proteins. Interacts with snoRNA U3. uS11 interacts with MPP10. Component of the ribosomal small subunit (SSU) processome composed of at least 40 protein subunits and snoRNA U3.

It is found in the cytoplasm. The protein resides in the nucleus. It localises to the nucleolus. In terms of biological role, component of the ribosome, a large ribonucleoprotein complex responsible for the synthesis of proteins in the cell. The small ribosomal subunit (SSU) binds messenger RNAs (mRNAs) and translates the encoded message by selecting cognate aminoacyl-transfer RNA (tRNA) molecules. The large subunit (LSU) contains the ribosomal catalytic site termed the peptidyl transferase center (PTC), which catalyzes the formation of peptide bonds, thereby polymerizing the amino acids delivered by tRNAs into a polypeptide chain. The nascent polypeptides leave the ribosome through a tunnel in the LSU and interact with protein factors that function in enzymatic processing, targeting, and the membrane insertion of nascent chains at the exit of the ribosomal tunnel. eS7 is involved in nucleolar processing of pre-18S ribosomal RNA and ribosome assembly. The polypeptide is Small ribosomal subunit protein eS7 (rps7) (Schizosaccharomyces pombe (strain 972 / ATCC 24843) (Fission yeast)).